The sequence spans 225 residues: Transcriptional activator protein BglJ (225 aa).

The region spanning 146–211 is the HTH luxR-type domain; the sequence is YINQSRTLSP…GLLEAADILL (66 aa). A DNA-binding region (H-T-H motif) is located at residues 170–189; sequence MTQIAEQLKRNIKTIRAHKF.

In terms of assembly, forms a complex with RcsB; genetically both BglJ and RcsB are required to relieve bgl operon repression by H-NS and by StpA.

A crytic transcriptional activator. When its expression is induced it relieves H-NS repression of the bgl operon. Acts independently of transcription factor LeuO. The chain is Transcriptional activator protein BglJ (bglJ) from Escherichia coli (strain K12).